The sequence spans 321 residues: Lipoyl synthase (321 aa).

7 residues coordinate [4Fe-4S] cluster: C68, C73, C79, C94, C98, C101, and S308. In terms of domain architecture, Radical SAM core spans 80–297; it reads FNHGTATFMI…KALADELGFT (218 aa).

It belongs to the radical SAM superfamily. Lipoyl synthase family. The cofactor is [4Fe-4S] cluster.

Its subcellular location is the cytoplasm. It carries out the reaction [[Fe-S] cluster scaffold protein carrying a second [4Fe-4S](2+) cluster] + N(6)-octanoyl-L-lysyl-[protein] + 2 oxidized [2Fe-2S]-[ferredoxin] + 2 S-adenosyl-L-methionine + 4 H(+) = [[Fe-S] cluster scaffold protein] + N(6)-[(R)-dihydrolipoyl]-L-lysyl-[protein] + 4 Fe(3+) + 2 hydrogen sulfide + 2 5'-deoxyadenosine + 2 L-methionine + 2 reduced [2Fe-2S]-[ferredoxin]. It participates in protein modification; protein lipoylation via endogenous pathway; protein N(6)-(lipoyl)lysine from octanoyl-[acyl-carrier-protein]: step 2/2. Functionally, catalyzes the radical-mediated insertion of two sulfur atoms into the C-6 and C-8 positions of the octanoyl moiety bound to the lipoyl domains of lipoate-dependent enzymes, thereby converting the octanoylated domains into lipoylated derivatives. The sequence is that of Lipoyl synthase from Shewanella oneidensis (strain ATCC 700550 / JCM 31522 / CIP 106686 / LMG 19005 / NCIMB 14063 / MR-1).